The following is an 86-amino-acid chain: Small ribosomal subunit protein bS20 (86 aa).

Over residues 1 to 27 the composition is skewed to basic residues; the sequence is MANSKSAKKRAIQAEKRRQHNASRRSM. Residues 1–28 form a disordered region; that stretch reads MANSKSAKKRAIQAEKRRQHNASRRSMM.

Belongs to the bacterial ribosomal protein bS20 family.

Its function is as follows. Binds directly to 16S ribosomal RNA. The protein is Small ribosomal subunit protein bS20 of Vibrio parahaemolyticus serotype O3:K6 (strain RIMD 2210633).